Reading from the N-terminus, the 696-residue chain is DNA-directed RNA polymerase subunit beta N-terminal section (696 aa).

Belongs to the RNA polymerase beta chain family. In plastids the minimal PEP RNA polymerase catalytic core is composed of four subunits: alpha, beta, beta', and beta''. When a (nuclear-encoded) sigma factor is associated with the core the holoenzyme is formed, which can initiate transcription.

The protein resides in the plastid. Its subcellular location is the chloroplast. It catalyses the reaction RNA(n) + a ribonucleoside 5'-triphosphate = RNA(n+1) + diphosphate. Its function is as follows. DNA-dependent RNA polymerase catalyzes the transcription of DNA into RNA using the four ribonucleoside triphosphates as substrates. The protein is DNA-directed RNA polymerase subunit beta N-terminal section (rpoB1) of Stigeoclonium helveticum (Green alga).